Here is a 121-residue protein sequence, read N- to C-terminus: Large ribosomal subunit protein uL24 (121 aa).

Belongs to the universal ribosomal protein uL24 family. In terms of assembly, part of the 50S ribosomal subunit.

In terms of biological role, one of two assembly initiator proteins, it binds directly to the 5'-end of the 23S rRNA, where it nucleates assembly of the 50S subunit. Located at the polypeptide exit tunnel on the outside of the subunit. This is Large ribosomal subunit protein uL24 from Pyrococcus furiosus (strain ATCC 43587 / DSM 3638 / JCM 8422 / Vc1).